We begin with the raw amino-acid sequence, 327 residues long: DNA-directed RNA polymerase subunit alpha (327 aa).

Positions 1–233 are alpha N-terminal domain (alpha-NTD); sequence MQGSVTEFLK…EQLEAFVDLR (233 aa). Positions 247–327 are alpha C-terminal domain (alpha-CTD); that stretch reads FDPVLLRPVD…NWPPLGFIDK (81 aa).

It belongs to the RNA polymerase alpha chain family. As to quaternary structure, homodimer. The RNAP catalytic core consists of 2 alpha, 1 beta, 1 beta' and 1 omega subunit. When a sigma factor is associated with the core the holoenzyme is formed, which can initiate transcription.

The catalysed reaction is RNA(n) + a ribonucleoside 5'-triphosphate = RNA(n+1) + diphosphate. Functionally, DNA-dependent RNA polymerase catalyzes the transcription of DNA into RNA using the four ribonucleoside triphosphates as substrates. This Baumannia cicadellinicola subsp. Homalodisca coagulata protein is DNA-directed RNA polymerase subunit alpha.